Reading from the N-terminus, the 471-residue chain is Glutamate--tRNA ligase (471 aa).

The 'HIGH' region signature appears at 9–19 (PSPTGYLHVGG). Cys98, Cys100, Cys125, and His127 together coordinate Zn(2+). The 'KMSKS' region signature appears at 237–241 (KLSKR). Residue Lys240 participates in ATP binding.

Belongs to the class-I aminoacyl-tRNA synthetase family. Glutamate--tRNA ligase type 1 subfamily. In terms of assembly, monomer. Zn(2+) is required as a cofactor.

The protein localises to the cytoplasm. The catalysed reaction is tRNA(Glu) + L-glutamate + ATP = L-glutamyl-tRNA(Glu) + AMP + diphosphate. Functionally, catalyzes the attachment of glutamate to tRNA(Glu) in a two-step reaction: glutamate is first activated by ATP to form Glu-AMP and then transferred to the acceptor end of tRNA(Glu). In Enterobacter sp. (strain 638), this protein is Glutamate--tRNA ligase.